Here is an 800-residue protein sequence, read N- to C-terminus: Fibroblast growth factor receptor 4 (800 aa).

Positions 1 to 16 (MWLLLALLSIFQETPA) are cleaved as a signal peptide. 3 consecutive Ig-like C2-type domains span residues 17-115 (FSLE…LIMD), 148-236 (PQRM…YLLD), and 245-345 (PILQ…AWLT). Residues 17-367 (FSLEASEEME…TATSEARYTD (351 aa)) are Extracellular-facing. C54 and C98 are joined by a disulfide. N109 carries an N-linked (GlcNAc...) asparagine glycan. C168 and C220 are disulfide-bonded. N-linked (GlcNAc...) asparagine glycans are attached at residues N254, N286, and N307. C267 and C329 form a disulfide bridge. A helical transmembrane segment spans residues 368–388 (IILYVSGSLALVLLLLLAGVY). Topologically, residues 389-800 (HRQAIHGHHS…PFPFPEAQTT (412 aa)) are cytoplasmic. The Protein kinase domain maps to 465 to 753 (LVLGKPLGEG…VLLAVSEEYL (289 aa)). ATP contacts are provided by residues 471-479 (LGEGCFGQV) and K501. Position 571 is a phosphoserine (S571). Catalysis depends on D610, which acts as the Proton acceptor. A phosphotyrosine; by autocatalysis mark is found at Y640, Y641, and Y752. The disordered stretch occupies residues 768–800 (DASSTCSSSDSVFSHDPLPLEPSPFPFPEAQTT). A compositionally biased stretch (low complexity) spans 770–781 (SSTCSSSDSVFS).

Belongs to the protein kinase superfamily. Tyr protein kinase family. Fibroblast growth factor receptor subfamily. As to quaternary structure, monomer. Homodimer after ligand binding. Interacts with FGF1, FGF2, FGF4, FGF6, FGF8, FGF9, FGF16, FGF17, FGF18, FGF19, FGF21 and FGF23 (in vitro). Binding affinity for FGF family members is enhanced by interactions between FGFs and heparan sulfate proteoglycans. Interacts with KLB; this strongly increases the affinity for FGF19 and FGF23. Affinity for FGF19 is strongly increased by KLB and sulfated glycosaminoglycans. KLB and KL both interact with the core-glycosylated FGFR4 in the endoplasmic reticulum and promote its degradation, so that only FGFR4 with fully mature N-glycans is expressed at the cell surface. Identified in a complex with NCAM1, CDH2, PLCG1, FRS2, SRC, SHC1, GAP43 and CTTN. Interacts with MMP14 and HIP1. Interacts with STAT3. N-glycosylated. Full maturation of the glycan chains in the Golgi is essential for high affinity interaction with FGF19. Post-translationally, ubiquitinated. Subject to proteasomal degradation when not fully glycosylated. In terms of processing, autophosphorylated. Binding of FGF family members together with heparan sulfate proteoglycan or heparin promotes receptor dimerization and autophosphorylation on tyrosine residues. Autophosphorylation occurs in trans between the two FGFR molecules present in the dimer.

Its subcellular location is the cell membrane. The protein resides in the endosome. The protein localises to the endoplasmic reticulum. It carries out the reaction L-tyrosyl-[protein] + ATP = O-phospho-L-tyrosyl-[protein] + ADP + H(+). Its activity is regulated as follows. Present in an inactive conformation in the absence of bound ligand. Ligand binding leads to dimerization and activation by autophosphorylation on tyrosine residues. In terms of biological role, tyrosine-protein kinase that acts as a cell-surface receptor for fibroblast growth factors and plays a role in the regulation of cell proliferation, differentiation and migration, and in regulation of lipid metabolism, bile acid biosynthesis, glucose uptake, vitamin D metabolism and phosphate homeostasis. Required for normal down-regulation of the expression of CYP7A1, the rate-limiting enzyme in bile acid synthesis, in response to FGF19. Phosphorylates PLCG1 and FRS2. Ligand binding leads to the activation of several signaling cascades. Activation of PLCG1 leads to the production of the cellular signaling molecules diacylglycerol and inositol 1,4,5-trisphosphate. Phosphorylation of FRS2 triggers recruitment of GRB2, GAB1, PIK3R1 and SOS1, and mediates activation of RAS, MAPK1/ERK2, MAPK3/ERK1 and the MAP kinase signaling pathway, as well as of the AKT1 signaling pathway. Promotes SRC-dependent phosphorylation of the matrix protease MMP14 and its lysosomal degradation. FGFR4 signaling is down-regulated by receptor internalization and degradation; MMP14 promotes internalization and degradation of FGFR4. This Rattus norvegicus (Rat) protein is Fibroblast growth factor receptor 4 (Fgfr4).